Reading from the N-terminus, the 445-residue chain is Serine/threonine-protein kinase Nek2 (445 aa).

A Protein kinase domain is found at 8-271 (YEVLYTIGTG…VEEILENPLI (264 aa)). ATP-binding positions include 14 to 22 (IGTGSYGRC) and K37. The Proton acceptor role is filled by D141. T170 bears the Phosphothreonine; by autocatalysis mark. S171 bears the Phosphoserine; by autocatalysis mark. A phosphothreonine; by autocatalysis mark is found at T175 and T179. Residue S184 is modified to Phosphoserine. Position 241 is a phosphoserine; by autocatalysis (S241). The interaction with PCNT stretch occupies residues 264-445 (EILENPLIAD…LKSRQILGMR (182 aa)). Residues S296 and S300 each carry the phosphoserine modification. The interaction with CEP85 stretch occupies residues 301–445 (PVLSELKLKE…LKSRQILGMR (145 aa)). A coiled-coil region spans residues 303-362 (LSELKLKEIQLQERERALKAREERLEQKEQELCVRERLAEDKLARAENLLKNYSLLKERK). Residues 306–334 (LKLKEIQLQERERALKAREERLEQKEQEL) form a leucine-zipper region. Positions 329–445 (QKEQELCVRE…LKSRQILGMR (117 aa)) are necessary for interaction with MAD1L1. Positions 333–370 (ELCVRERLAEDKLARAENLLKNYSLLKERKFLSLASNP) are required for microtubule binding and for localization to the centrosomes. S356 and S365 each carry phosphoserine; by STK3/MST2. 4 positions are modified to phosphoserine: S387, S390, S397, and S402. The interval 403–439 (QLTSKSKCKDLKKRLHAAQLRAQALSDIEKNYQLKSR) is interaction with SAV1 and STK3/MST2. Position 406 is a phosphoserine; by STK3/MST2 (S406). The stretch at 406 to 430 (SKSKCKDLKKRLHAAQLRAQALSDI) forms a coiled coil. At S428 the chain carries Phosphoserine. S438 bears the Phosphoserine; by STK3/MST2 mark.

It belongs to the protein kinase superfamily. NEK Ser/Thr protein kinase family. NIMA subfamily. As to quaternary structure, isoform 1, isoform 2 and isoform 4 form homo- and heterodimers. Interacts with NECAB3 and HMGA2. Isoform 1 interacts with CDC20, CTNB1, MAD1L1, MAPK, NEK11, NPM1, NDC80, PCNT and SGO1. Isoform 1 interacts with STK3/MST2 (via SARAH domain) and SAV1 (via SARAH domain). Isoform 1 and isoform 2 interact with MAD2L1. Isoform 1 and isoform 4 interact with PPP1CA and PPP1CC. Interacts with CEP68; the interaction leads to phosphorylation of CEP68. Interacts with CNTLN; the interaction leads to phosphorylation of CNTLN. Isoform 1 interacts with CEP85. Interacts with CCDC102B; the interaction leads to phosphorylation of CCDC102B. Requires Mg(2+) as cofactor. Activated by autophosphorylation. Protein phosphatase 1 represses autophosphorylation and activation of isoform 1 by dephosphorylation. Phosphorylation by STK3/MST2 is necessary for its localization to the centrosome. In terms of tissue distribution, isoform 1 and isoform 2 are expressed in peripheral blood T-cells and a wide variety of transformed cell types. Isoform 1 and isoform 4 are expressed in the testis. Up-regulated in various cancer cell lines, as well as primary breast tumors.

The protein localises to the nucleus. Its subcellular location is the nucleolus. It is found in the cytoplasm. It localises to the cytoskeleton. The protein resides in the microtubule organizing center. The protein localises to the centrosome. Its subcellular location is the spindle pole. It is found in the chromosome. It localises to the centromere. The protein resides in the kinetochore. The enzyme catalyses L-seryl-[protein] + ATP = O-phospho-L-seryl-[protein] + ADP + H(+). It catalyses the reaction L-threonyl-[protein] + ATP = O-phospho-L-threonyl-[protein] + ADP + H(+). Isoform 1 is inhibited by ionizing radiation in the presence of PPP1CA. Its catalytic activity is inhibited by the inhibitor CCT241950. In the presence of this inhibitor, displays an autoinhibited conformation: Tyr-70 side chain points into the active site, interacts with the activation loop, and blocks the alphaC helix. In terms of biological role, protein kinase which is involved in the control of centrosome separation and bipolar spindle formation in mitotic cells and chromatin condensation in meiotic cells. Regulates centrosome separation (essential for the formation of bipolar spindles and high-fidelity chromosome separation) by phosphorylating centrosomal proteins such as CROCC, CEP250 and NINL, resulting in their displacement from the centrosomes. Regulates kinetochore microtubule attachment stability in mitosis via phosphorylation of NDC80. Involved in regulation of mitotic checkpoint protein complex via phosphorylation of CDC20 and MAD2L1. Plays an active role in chromatin condensation during the first meiotic division through phosphorylation of HMGA2. Phosphorylates: PPP1CC; SGO1; NECAB3 and NPM1. Essential for localization of MAD2L1 to kinetochore and MAPK1 and NPM1 to the centrosome. Phosphorylates CEP68 and CNTLN directly or indirectly. NEK2-mediated phosphorylation of CEP68 promotes CEP68 dissociation from the centrosome and its degradation at the onset of mitosis. Involved in the regulation of centrosome disjunction. Phosphorylates CCDC102B either directly or indirectly which causes CCDC102B to dissociate from the centrosome and allows for centrosome separation. Phosphorylates and activates NEK11 in G1/S-arrested cells. Functionally, not present in the nucleolus and, in contrast to isoform 1, does not phosphorylate and activate NEK11 in G1/S-arrested cells. The protein is Serine/threonine-protein kinase Nek2 (NEK2) of Homo sapiens (Human).